A 306-amino-acid chain; its full sequence is Ribosomal protein L11 methyltransferase (306 aa).

Residues threonine 154, glycine 179, aspartate 201, and asparagine 242 each coordinate S-adenosyl-L-methionine.

It belongs to the methyltransferase superfamily. PrmA family.

The protein localises to the cytoplasm. It catalyses the reaction L-lysyl-[protein] + 3 S-adenosyl-L-methionine = N(6),N(6),N(6)-trimethyl-L-lysyl-[protein] + 3 S-adenosyl-L-homocysteine + 3 H(+). Methylates ribosomal protein L11. This is Ribosomal protein L11 methyltransferase from Stenotrophomonas maltophilia (strain K279a).